The following is a 118-amino-acid chain: DNA-binding protein SSO0352 (118 aa).

The protein belongs to the PDCD5 family.

This chain is DNA-binding protein SSO0352, found in Saccharolobus solfataricus (strain ATCC 35092 / DSM 1617 / JCM 11322 / P2) (Sulfolobus solfataricus).